The primary structure comprises 295 residues: Methionine aminopeptidase (295 aa).

Histidine 62 serves as a coordination point for substrate. The a divalent metal cation site is built by aspartate 82, aspartate 93, and histidine 153. Histidine 161 serves as a coordination point for substrate. Glutamate 187 and glutamate 280 together coordinate a divalent metal cation.

This sequence belongs to the peptidase M24A family. Methionine aminopeptidase archaeal type 2 subfamily. Monomer. Co(2+) is required as a cofactor. It depends on Zn(2+) as a cofactor. The cofactor is Mn(2+). Fe(2+) serves as cofactor.

It catalyses the reaction Release of N-terminal amino acids, preferentially methionine, from peptides and arylamides.. Functionally, removes the N-terminal methionine from nascent proteins. The N-terminal methionine is often cleaved when the second residue in the primary sequence is small and uncharged (Met-Ala-, Cys, Gly, Pro, Ser, Thr, or Val). The polypeptide is Methionine aminopeptidase (Pyrococcus abyssi (strain GE5 / Orsay)).